Here is a 497-residue protein sequence, read N- to C-terminus: Envelope glycoprotein E (497 aa).

Residues 1 to 398 (MCVFQILIIV…GTIIYDILLT (398 aa)) lie on the Virion surface side of the membrane. N-linked (GlcNAc...) asparagine; by host glycosylation is found at Asn-60, Asn-133, Asn-148, Asn-203, Asn-277, Asn-366, and Asn-388. The chain crosses the membrane as a helical span at residues 399-419 (SLSIGAIIIVIVGGVCIAILI). The Intravirion segment spans residues 420–497 (RRRRRRRTRG…KIRKRLDLYH (78 aa)).

The protein belongs to the alphaherpesvirinae glycoprotein E family. In terms of assembly, interacts with gI. In terms of processing, phosphorylated within the acidic cluster. Phosphorylation determines whether endocytosed viral gE traffics to the trans-Golgi network or recycles to the cell membrane.

It localises to the virion membrane. The protein resides in the host cell membrane. The protein localises to the host cell junction. It is found in the host Golgi apparatus membrane. Its subcellular location is the host endosome membrane. Its function is as follows. In epithelial cells, the heterodimer gE/gI is required for the cell-to-cell spread of the virus, by sorting nascent virions to cell junctions. Once the virus reaches the cell junctions, virus particles can spread to adjacent cells extremely rapidly through interactions with cellular receptors that accumulate at these junctions. Implicated in basolateral spread in polarized cells. In neuronal cells, gE/gI is essential for the anterograde spread of the infection throughout the host nervous system. Together with US9, the heterodimer gE/gI is involved in the sorting and transport of viral structural components toward axon tips. This Gallus gallus (Chicken) protein is Envelope glycoprotein E (MDV096).